The primary structure comprises 158 residues: Small ribosomal subunit protein uS9 (158 aa).

The tract at residues 1-20 (MTEAVETETVEPTTDEATAA) is disordered. Low complexity predominate over residues 10-20 (VEPTTDEATAA).

Belongs to the universal ribosomal protein uS9 family.

The chain is Small ribosomal subunit protein uS9 from Mycobacterium sp. (strain JLS).